Consider the following 397-residue polypeptide: uncharacterized protein (397 aa).

Residues C8, C14, C17, and C95 each coordinate [4Fe-4S] cluster. Residues Q229, Y258, E279, and D325 each coordinate S-adenosyl-L-methionine. The Nucleophile role is filled by C352.

It belongs to the class I-like SAM-binding methyltransferase superfamily. RNA M5U methyltransferase family.

This is an uncharacterized protein from Chlamydia muridarum (strain MoPn / Nigg).